The sequence spans 257 residues: Probable enoyl-CoA hydratase echA17 (257 aa).

Belongs to the enoyl-CoA hydratase/isomerase family.

The enzyme catalyses a (3S)-3-hydroxyacyl-CoA = a (2E)-enoyl-CoA + H2O. It carries out the reaction a 4-saturated-(3S)-3-hydroxyacyl-CoA = a (3E)-enoyl-CoA + H2O. Its function is as follows. Could possibly oxidize fatty acids using specific components. The chain is Probable enoyl-CoA hydratase echA17 (echA17) from Mycolicibacterium paratuberculosis (strain ATCC BAA-968 / K-10) (Mycobacterium paratuberculosis).